A 176-amino-acid polypeptide reads, in one-letter code: Flavodoxin 1 (176 aa).

Positions 4 to 165 (TGIFFGSDTG…RVEKWVKQIS (162 aa)) constitute a Flavodoxin-like domain.

Belongs to the flavodoxin family. The cofactor is FMN.

Functionally, low-potential electron donor to a number of redox enzymes (Potential). Involved in the reactivation of inactive cob(II)alamin in methionine synthase. This is Flavodoxin 1 (fldA) from Escherichia coli O157:H7.